A 188-amino-acid chain; its full sequence is Nicotinamide-nucleotide adenylyltransferase (188 aa).

A disordered region spans residues 166-188; that stretch reads SDSLERYAATGESLPESLDDLDD.

It belongs to the archaeal NMN adenylyltransferase family.

It is found in the cytoplasm. It catalyses the reaction beta-nicotinamide D-ribonucleotide + ATP + H(+) = diphosphate + NAD(+). It functions in the pathway cofactor biosynthesis; NAD(+) biosynthesis; NAD(+) from nicotinamide D-ribonucleotide: step 1/1. The polypeptide is Nicotinamide-nucleotide adenylyltransferase (Haloarcula marismortui (strain ATCC 43049 / DSM 3752 / JCM 8966 / VKM B-1809) (Halobacterium marismortui)).